Reading from the N-terminus, the 878-residue chain is Alanine--tRNA ligase (878 aa).

Zn(2+)-binding residues include histidine 567, histidine 571, cysteine 669, and histidine 673.

Belongs to the class-II aminoacyl-tRNA synthetase family. Requires Zn(2+) as cofactor.

The protein localises to the cytoplasm. The catalysed reaction is tRNA(Ala) + L-alanine + ATP = L-alanyl-tRNA(Ala) + AMP + diphosphate. Its function is as follows. Catalyzes the attachment of alanine to tRNA(Ala) in a two-step reaction: alanine is first activated by ATP to form Ala-AMP and then transferred to the acceptor end of tRNA(Ala). Also edits incorrectly charged Ser-tRNA(Ala) and Gly-tRNA(Ala) via its editing domain. This Rickettsia felis (strain ATCC VR-1525 / URRWXCal2) (Rickettsia azadi) protein is Alanine--tRNA ligase.